Consider the following 110-residue polypeptide: Quaternary ammonium compound-resistance protein QacF (110 aa).

Helical transmembrane passes span 1–21, 31–51, 58–78, and 85–105; these read MKNW…TSAL, VPSV…SLAL, IAYA…AWIF, and FWAF…NLLS.

This sequence belongs to the drug/metabolite transporter (DMT) superfamily. Small multidrug resistance (SMR) (TC 2.A.7.1) family.

Its subcellular location is the cell membrane. In terms of biological role, multidrug exporter. Is implicated for the resistance to bacteriocidal quaternary ammonium compounds. The protein is Quaternary ammonium compound-resistance protein QacF (qacF) of Klebsiella aerogenes (Enterobacter aerogenes).